Consider the following 235-residue polypeptide: tRNA pseudouridine synthase B (235 aa).

Aspartate 48 (nucleophile) is an active-site residue.

Belongs to the pseudouridine synthase TruB family. Type 1 subfamily.

It catalyses the reaction uridine(55) in tRNA = pseudouridine(55) in tRNA. Its function is as follows. Responsible for synthesis of pseudouridine from uracil-55 in the psi GC loop of transfer RNAs. This chain is tRNA pseudouridine synthase B, found in Parabacteroides distasonis (strain ATCC 8503 / DSM 20701 / CIP 104284 / JCM 5825 / NCTC 11152).